We begin with the raw amino-acid sequence, 313 residues long: tRNA-cytidine(32) 2-sulfurtransferase (313 aa).

Residues 47 to 52 (SGGKDS) carry the PP-loop motif motif. Residues Cys122, Cys125, and Cys213 each contribute to the [4Fe-4S] cluster site.

This sequence belongs to the TtcA family. In terms of assembly, homodimer. Requires Mg(2+) as cofactor. The cofactor is [4Fe-4S] cluster.

The protein localises to the cytoplasm. The enzyme catalyses cytidine(32) in tRNA + S-sulfanyl-L-cysteinyl-[cysteine desulfurase] + AH2 + ATP = 2-thiocytidine(32) in tRNA + L-cysteinyl-[cysteine desulfurase] + A + AMP + diphosphate + H(+). The protein operates within tRNA modification. Catalyzes the ATP-dependent 2-thiolation of cytidine in position 32 of tRNA, to form 2-thiocytidine (s(2)C32). The sulfur atoms are provided by the cysteine/cysteine desulfurase (IscS) system. This Yersinia enterocolitica serotype O:8 / biotype 1B (strain NCTC 13174 / 8081) protein is tRNA-cytidine(32) 2-sulfurtransferase.